Reading from the N-terminus, the 99-residue chain is Acylphosphatase-1 (99 aa).

One can recognise an Acylphosphatase-like domain in the interval 9–99 (SVDYEVFGKV…LEHSTFSICK (91 aa)). Residues arginine 24 and asparagine 42 contribute to the active site.

Belongs to the acylphosphatase family.

The catalysed reaction is an acyl phosphate + H2O = a carboxylate + phosphate + H(+). In Xenopus laevis (African clawed frog), this protein is Acylphosphatase-1 (acyp1).